The following is a 180-amino-acid chain: Large ribosomal subunit protein uL6 (180 aa).

The protein belongs to the universal ribosomal protein uL6 family. As to quaternary structure, part of the 50S ribosomal subunit.

Functionally, this protein binds to the 23S rRNA, and is important in its secondary structure. It is located near the subunit interface in the base of the L7/L12 stalk, and near the tRNA binding site of the peptidyltransferase center. The chain is Large ribosomal subunit protein uL6 from Borrelia recurrentis (strain A1).